The following is a 37-amino-acid chain: Large ribosomal subunit protein bL36 (37 aa).

It belongs to the bacterial ribosomal protein bL36 family.

This is Large ribosomal subunit protein bL36 from Shewanella woodyi (strain ATCC 51908 / MS32).